The chain runs to 393 residues: MQQTKKLTHSDITIAVMSGPFLQRGEPALVSKWYRTKMALACGVDLVVELPYAFSTQKAETFANGAISILNALHVSEICFGSEDGQIENFYNTISVQKNEEETFNRLVKQFMNAGNSYAKATSEAFLHILSSEKNIDMSQPNNILGFQYIKAILMQNSSMQAQTIKRFASHYHDETFNDQHIASATSIRKQLFSENSSFTEIESFIPKATASLLASYKQNYGTLHNWEQYFSFFKYKLMTMSPEDLRHIYEIEEGLEHRILSKIQTSSSFHLFMEALKTKRYTWTRLQRACTHILTNTTKEEIYCANIEQHAPYIRLLGMSQKGQTYLSKNKKKIELPILTHTKTFDHPTLHIERKANSVYFSIMKEPLRTQLLKRDATHHPIRYDETTAKFL.

ATP is bound by residues Gly-81, Asn-142, and Arg-167.

This sequence belongs to the TmcAL family.

The protein localises to the cytoplasm. It carries out the reaction cytidine(34) in elongator tRNA(Met) + acetate + ATP = N(4)-acetylcytidine(34) in elongator tRNA(Met) + AMP + diphosphate. Functionally, catalyzes the formation of N(4)-acetylcytidine (ac(4)C) at the wobble position of elongator tRNA(Met), using acetate and ATP as substrates. First activates an acetate ion to form acetyladenylate (Ac-AMP) and then transfers the acetyl group to tRNA to form ac(4)C34. This is tRNA(Met) cytidine acetate ligase from Bacillus cereus (strain AH820).